A 130-amino-acid polypeptide reads, in one-letter code: Small ribosomal subunit protein uS8x (130 aa).

This sequence belongs to the universal ribosomal protein uS8 family.

The chain is Small ribosomal subunit protein uS8x (RPS15AD) from Arabidopsis thaliana (Mouse-ear cress).